Consider the following 415-residue polypeptide: Probable peptidoglycan glycosyltransferase FtsW (415 aa).

Transmembrane regions (helical) follow at residues 31-51 (PILMVAVLALLAWGLVMVTSA), 63-83 (FFFVIRQTIAVVIGASITVWL), 97-117 (LWILIASLLLLLVVLLPGIGH), 133-153 (IQVSEFARLGLIIWMAGYIAT), 162-182 (ITGMLGPGVVIFAASLLLLLQ), 185-205 (FGTTAVLAATLFAMAWLARAQ), 206-226 (WQMMVGSTLVMGVLGVFVVLS), 245-265 (FGHGYQLANALIAIGTGGVWG), 285-305 (FIFAVLAEELGLIGVIALIGL), 326-346 (IAGAALAWGISVWIGMQALIN), and 361-381 (LPLMSYGGSAMIVALISLGFL).

It belongs to the SEDS family. FtsW subfamily.

It localises to the cell inner membrane. The enzyme catalyses [GlcNAc-(1-&gt;4)-Mur2Ac(oyl-L-Ala-gamma-D-Glu-L-Lys-D-Ala-D-Ala)](n)-di-trans,octa-cis-undecaprenyl diphosphate + beta-D-GlcNAc-(1-&gt;4)-Mur2Ac(oyl-L-Ala-gamma-D-Glu-L-Lys-D-Ala-D-Ala)-di-trans,octa-cis-undecaprenyl diphosphate = [GlcNAc-(1-&gt;4)-Mur2Ac(oyl-L-Ala-gamma-D-Glu-L-Lys-D-Ala-D-Ala)](n+1)-di-trans,octa-cis-undecaprenyl diphosphate + di-trans,octa-cis-undecaprenyl diphosphate + H(+). It participates in cell wall biogenesis; peptidoglycan biosynthesis. In terms of biological role, peptidoglycan polymerase that is essential for cell division. This chain is Probable peptidoglycan glycosyltransferase FtsW, found in Halothiobacillus neapolitanus (strain ATCC 23641 / c2) (Thiobacillus neapolitanus).